The following is a 259-amino-acid chain: Malonyl-[acyl-carrier protein] O-methyltransferase 2 (259 aa).

Belongs to the methyltransferase superfamily.

The catalysed reaction is malonyl-[ACP] + S-adenosyl-L-methionine = malonyl-[ACP] methyl ester + S-adenosyl-L-homocysteine. It participates in cofactor biosynthesis; biotin biosynthesis. Its function is as follows. Converts the free carboxyl group of a malonyl-thioester to its methyl ester by transfer of a methyl group from S-adenosyl-L-methionine (SAM). It allows to synthesize pimeloyl-ACP via the fatty acid synthetic pathway. The chain is Malonyl-[acyl-carrier protein] O-methyltransferase 2 from Ilyobacter polytropus (strain ATCC 51220 / DSM 2926 / LMG 16218 / CuHBu1).